The sequence spans 376 residues: WW domain-binding protein 4 (376 aa).

Residues 11-42 form a Matrin-type zinc finger; sequence KFCDYCKCWIADNRPSVEFHERGKNHKENVAR. Polar residues predominate over residues 94-111; that stretch reads PTVSPVISTVQPTPTSNQ. 2 disordered regions span residues 94-127 and 192-324; these read PTVS…ASKG and WEKP…ECLS. Over residues 114–123 the composition is skewed to basic residues; that stretch reads EKKKKKKKKE. WW domains follow at residues 123–156 and 164–197; these read EASK…KPEG and TAAK…KPED. Over residues 219-272 the composition is skewed to basic and acidic residues; that stretch reads EDAKSSDSHSDSEGEQKKAGEASTETKKLIIKFKEKNKSTEKRIGPEIQKEKST. A phosphoserine mark is found at Ser-228 and Ser-230. The segment at 357–375 is interaction with SNRNP200; the sequence is KKRRLENGKSRNLRQRGDD.

As to quaternary structure, component of the spliceosome B complex. Associated with U2 snRNPs. Binds splicing factors SNRPB, SNRPC and SF1. Interacts via the WW domains with the Pro-rich domains of KHDRBS1/SAM68. Interacts via the WW domains with the Pro-rich domains of WBP11. Interacts with SNRNP200.

The protein localises to the nucleus. It localises to the nucleus speckle. Its function is as follows. Involved in pre-mRNA splicing as a component of the spliceosome. May play a role in cross-intron bridging of U1 and U2 snRNPs in the mammalian A complex. The chain is WW domain-binding protein 4 (Wbp4) from Mus musculus (Mouse).